A 682-amino-acid polypeptide reads, in one-letter code: Potassium-transporting ATPase ATP-binding subunit (682 aa).

A run of 4 helical transmembrane segments spans residues 34 to 54, 62 to 82, 219 to 239, and 254 to 274; these read PVMF…IAMA, ALFS…ANFA, IALT…TATL, and VLVA…LSAI. Asp-307 (4-aspartylphosphate intermediate) is an active-site residue. ATP contacts are provided by residues Asp-344, Glu-348, 377–384, and Lys-395; that span reads FTAQSRMS. Mg(2+) is bound by residues Asp-518 and Asp-522. The next 3 helical transmembrane spans lie at 588-608, 616-636, and 656-676; these read FAII…LNIM, AILS…PLAL, and IYGL…DLLL.

The protein belongs to the cation transport ATPase (P-type) (TC 3.A.3) family. Type IA subfamily. The system is composed of three essential subunits: KdpA, KdpB and KdpC.

The protein localises to the cell inner membrane. The enzyme catalyses K(+)(out) + ATP + H2O = K(+)(in) + ADP + phosphate + H(+). Its function is as follows. Part of the high-affinity ATP-driven potassium transport (or Kdp) system, which catalyzes the hydrolysis of ATP coupled with the electrogenic transport of potassium into the cytoplasm. This subunit is responsible for energy coupling to the transport system and for the release of the potassium ions to the cytoplasm. This Escherichia coli (strain SMS-3-5 / SECEC) protein is Potassium-transporting ATPase ATP-binding subunit.